The following is a 351-amino-acid chain: Cyanide hydratase (351 aa).

In terms of domain architecture, CN hydrolase spans Tyr6–Leu285. The active-site Proton acceptor is Glu46. Residue Lys128 is part of the active site. Cys163 serves as the catalytic Nucleophile.

This sequence belongs to the carbon-nitrogen hydrolase superfamily. Nitrilase family. In terms of assembly, oligomer of dimers, forming left-handed helical fibers with a diameter of 13 nm but with lengths ranging from approximately 1 um at the leading edge of the peak to having approximately the same length and diameter at the trailing edge.

It catalyses the reaction formamide = hydrogen cyanide + H2O. In terms of biological role, catalyzes the hydration of cyanide to formamide. Degradation of cyanide may be important for plant pathogenic fungi in infection of cyanogenic plants. This Neurospora crassa (strain ATCC 24698 / 74-OR23-1A / CBS 708.71 / DSM 1257 / FGSC 987) protein is Cyanide hydratase.